A 517-amino-acid chain; its full sequence is Facilitated trehalose transporter Tret1 (517 aa).

The Cytoplasmic portion of the chain corresponds to 1-56 (MWIEIPECYEVLRNVFSKFRRHSLTAAMVKLLMRADTHVSFTVPAEEPVAKCTFSQ). A helical membrane pass occupies residues 57 to 77 (VLAALSVSLGSMVVGFSSAYT). The Extracellular segment spans residues 78-100 (SPALVSMKDRNITSFEVTDQSGS). An N-linked (GlcNAc...) asparagine glycan is attached at Asn88. The chain crosses the membrane as a helical span at residues 101–121 (WVGGIMPLAGLVGGILGGPLI). Residues 122–135 (EYLGRKNTILATAT) lie on the Cytoplasmic side of the membrane. The helical transmembrane segment at 136 to 156 (PFIISWLLIACATHVAMVLVG) threads the bilayer. The Extracellular portion of the chain corresponds to 157 to 158 (RA). A helical transmembrane segment spans residues 159–179 (LSGFSVGVASLSLPVYLGETV). The Cytoplasmic portion of the chain corresponds to 180 to 184 (QPEVR). Residues 185-205 (GTLGLLPTAFGNIGILLCFVA) form a helical membrane-spanning segment. The Extracellular portion of the chain corresponds to 206-212 (GNYMDWS). The helical transmembrane segment at 213–233 (ELAFLGATLPVPFLILMFLIP) threads the bilayer. At 234–296 (ETPRWYVSRG…DLLKKTNLKP (63 aa)) the chain is on the cytoplasmic side. Residues 297–317 (LLISLGLMFFQQLSGINAVIF) traverse the membrane as a helical segment. The Extracellular segment spans residues 318–333 (YTVQIFQDAGSTIDEN). A helical transmembrane segment spans residues 334-354 (LCTIIVGVVNFIATFIATLLI). Topologically, residues 355 to 360 (DRLGRK) are cytoplasmic. A helical transmembrane segment spans residues 361–381 (MLLYISDIAMIITLMTLGGFF). Topologically, residues 382 to 392 (YVKNNGGDVSH) are extracellular. Residues 393–413 (IGWLPLASFVIFVLGFSLGFG) form a helical membrane-spanning segment. The Cytoplasmic segment spans residues 414-437 (PIPWLMMGEILPGKIRGSAASVAT). Residues 438–458 (AFNWSCTFVVTKTFADIIASI) traverse the membrane as a helical segment. Over 459 to 461 (GTH) the chain is Extracellular. A helical membrane pass occupies residues 462-482 (GAFWMFGSVCVVGLVFVIMYV). Over 483–517 (PETQGKSLEDIERKMCGRVRRMSSVANIKPLSFNM) the chain is Cytoplasmic.

Belongs to the major facilitator superfamily. Sugar transporter (TC 2.A.1.1) family. Trehalose transporter subfamily.

The protein resides in the cell membrane. High-capacity facilitative transporter for trehalose. Does not transport maltose, sucrose or lactose. Mediates the bidirectional transfer of trehalose. Responsible for the transport of trehalose synthesized in the fat body and the incorporation of trehalose into other tissues that require a carbon source, thereby regulating trehalose levels in the hemolymph. This chain is Facilitated trehalose transporter Tret1, found in Culex quinquefasciatus (Southern house mosquito).